Reading from the N-terminus, the 85-residue chain is CRISPR-associated endoribonuclease Cas2 2 (85 aa).

Aspartate 8 provides a ligand contact to Mg(2+).

Belongs to the CRISPR-associated endoribonuclease Cas2 protein family. As to quaternary structure, homodimer, forms a heterotetramer with a Cas1 homodimer. The cofactor is Mg(2+).

Functionally, CRISPR (clustered regularly interspaced short palindromic repeat), is an adaptive immune system that provides protection against mobile genetic elements (viruses, transposable elements and conjugative plasmids). CRISPR clusters contain sequences complementary to antecedent mobile elements and target invading nucleic acids. CRISPR clusters are transcribed and processed into CRISPR RNA (crRNA). Functions as a ssRNA-specific endoribonuclease. Involved in the integration of spacer DNA into the CRISPR cassette. The chain is CRISPR-associated endoribonuclease Cas2 2 from Chloroflexus aurantiacus (strain ATCC 29366 / DSM 635 / J-10-fl).